A 284-amino-acid chain; its full sequence is CUE domain-containing protein 2 (284 aa).

The region spanning 141 to 184 (EELPGVDVLLEVFPTCSMEQAQWVLAKARGDLEEAVHMLVEGKE) is the CUE domain. The interval 183-204 (KEEGPPGWDGPSQDLPRRLRGP) is disordered.

It belongs to the CUEDC2 family. As to quaternary structure, interacts with PGR and ESR1.

It is found in the cytoplasm. It localises to the nucleus. In terms of biological role, controls PGR and ESR1 protein levels through their targeting for ubiquitination and subsequent proteasomal degradation. The protein is CUE domain-containing protein 2 (Cuedc2) of Mus musculus (Mouse).